A 94-amino-acid chain; its full sequence is MSCHVLERLEEVIRQRIREGNPQSYTYRLYSSGLHNVARKVGEEAVETAVAALAEGEERLVQEAADLLYHLLVLLAAKGLALADVCKELERRMK.

The protein belongs to the PRA-PH family.

Its subcellular location is the cytoplasm. It catalyses the reaction 1-(5-phospho-beta-D-ribosyl)-ATP + H2O = 1-(5-phospho-beta-D-ribosyl)-5'-AMP + diphosphate + H(+). It participates in amino-acid biosynthesis; L-histidine biosynthesis; L-histidine from 5-phospho-alpha-D-ribose 1-diphosphate: step 2/9. This chain is Phosphoribosyl-ATP pyrophosphatase, found in Pyrobaculum calidifontis (strain DSM 21063 / JCM 11548 / VA1).